Here is a 394-residue protein sequence, read N- to C-terminus: Ribulose bisphosphate carboxylase large chain (394 aa).

At Lys5 the chain carries N6,N6,N6-trimethyllysine. Residues Asn114 and Thr164 each coordinate substrate. The active-site Proton acceptor is Lys166. Lys168 serves as a coordination point for substrate. Lys192, Asp194, and Glu195 together coordinate Mg(2+). N6-carboxylysine is present on Lys192. Catalysis depends on His285, which acts as the Proton acceptor. Substrate is bound by residues Arg286, His318, and Ser370.

It belongs to the RuBisCO large chain family. Type I subfamily. As to quaternary structure, heterohexadecamer of 8 large chains and 8 small chains; disulfide-linked. The disulfide link is formed within the large subunit homodimers. Requires Mg(2+) as cofactor. In terms of processing, the disulfide bond which can form in the large chain dimeric partners within the hexadecamer appears to be associated with oxidative stress and protein turnover.

The protein localises to the plastid. The protein resides in the chloroplast. It catalyses the reaction 2 (2R)-3-phosphoglycerate + 2 H(+) = D-ribulose 1,5-bisphosphate + CO2 + H2O. The enzyme catalyses D-ribulose 1,5-bisphosphate + O2 = 2-phosphoglycolate + (2R)-3-phosphoglycerate + 2 H(+). In terms of biological role, ruBisCO catalyzes two reactions: the carboxylation of D-ribulose 1,5-bisphosphate, the primary event in carbon dioxide fixation, as well as the oxidative fragmentation of the pentose substrate in the photorespiration process. Both reactions occur simultaneously and in competition at the same active site. The polypeptide is Ribulose bisphosphate carboxylase large chain (rbcL) (Alisma plantago-aquatica (Common water-plantain)).